Consider the following 347-residue polypeptide: tRNA dimethylallyltransferase (347 aa).

ATP is bound at residue 20–27 (GPTASGKT). 22–27 (TASGKT) lines the substrate pocket. Interaction with substrate tRNA stretches follow at residues 45–48 (DSAM), 169–173 (QRLMR), and 275–280 (RCVGYR).

The protein belongs to the IPP transferase family. As to quaternary structure, monomer. The cofactor is Mg(2+).

It carries out the reaction adenosine(37) in tRNA + dimethylallyl diphosphate = N(6)-dimethylallyladenosine(37) in tRNA + diphosphate. In terms of biological role, catalyzes the transfer of a dimethylallyl group onto the adenine at position 37 in tRNAs that read codons beginning with uridine, leading to the formation of N6-(dimethylallyl)adenosine (i(6)A). This chain is tRNA dimethylallyltransferase, found in Marinobacter nauticus (strain ATCC 700491 / DSM 11845 / VT8) (Marinobacter aquaeolei).